The sequence spans 303 residues: Short chain dehydrogenase pigC (303 aa).

Residues I45, D103, N130, R164, Y196, K200, and T231 each coordinate NADP(+). Y196 serves as the catalytic Proton donor. K200 functions as the Lowers pKa of active site Tyr in the catalytic mechanism.

The protein belongs to the short-chain dehydrogenases/reductases (SDR) family.

The protein operates within secondary metabolite biosynthesis. Its function is as follows. Short chain dehydrogenase; part of the gene cluster that mediates the biosynthesis of azaphilone pigments (MonAzPs), a complex mixture of compounds with a common azaphilone skeleton very widely used as food colorants. Within the pathway, pigC intercepts the very reactive benzaldehyde produced by the nrPKS pigA to reduce the omega-1 carbonyl to the alcohol to provide the first stable enzyme-free MonAzPs intermediate, 6-(4-hydroxy-2-oxopentyl)-3-methyl-2,4-dioxocyclohexane carbaldehyde, also known as M7PKS-1. The first step of the pathway is performed by the nrPKS pigA that forms the hexaketide precursor from successive condensations of five malonyl-CoA units, with a simple acetyl-CoA starter unit. The role of esterase pigG is not clear, but it may play at most a supplementary role in the formation of the benzaldehyde produced by the pigA nrPKS. This very reactive benzaldehyde is intercepted by the pigC ketoreductase that to provide the first stable enzyme-free MonAzPs intermediate, M7PKS-1. The FAD-dependent monooxygenase pigN hydroxylates M7PKS-1 at C-4, which triggers the formation of the pyran ring. PigJ, pigK and pigD are involved in the acetylation of the pyran ring. PigJ and pigK form the two subunits of a dedicated fungal FAS that produces the side chain fatty acyl moiety of MonAzPs and pigD transfers the fatty acyl chain to the C-4 alcohol. PigM and pigO are involved in the elimination of the omega-1 alcohol. PigM acts as an O-acetyltransferase that synthesizes the putative O-11 acetyl intermediate whereas pigO eliminates acetic acid to yield an intermediate with a C10(11) double bond. The dehydration of the C-11 alcohol followed by the reduction of the C6(7) double bond by the NAD(P)H-dependent oxidoreductase pigE increases the electrophilicity of the C-5 ketone of the resulting acyl benzopyran. This in turn sets up the C-5 ketone for an intramolecular Knoevenagel aldol condensation with the C-20 enol of the side chain. This condensation affords the characteristic linear tricyclic carbon skeletons of the yellow pigments that serve as the common precursors for the classical yellow pigments monascin and ankaflavin, orange pigments rubopunctatin and monascorubrin, and red pigments ribropunctamine and monascorubramine. The FAD-dependent oxidoreductase pigF is especially invoved in the biosynthesis of orange and red pigments via desaturation of C6(7). The protein is Short chain dehydrogenase pigC of Monascus ruber (Mold).